Consider the following 328-residue polypeptide: Beta-ketoacyl-[acyl-carrier-protein] synthase III (328 aa).

Residues C122 and H255 contribute to the active site. The tract at residues 256 to 260 is ACP-binding; that stretch reads QANIR. The active site involves N285.

Belongs to the thiolase-like superfamily. FabH family. As to quaternary structure, homodimer.

The protein localises to the cytoplasm. It carries out the reaction malonyl-[ACP] + acetyl-CoA + H(+) = 3-oxobutanoyl-[ACP] + CO2 + CoA. It participates in lipid metabolism; fatty acid biosynthesis. Its function is as follows. Catalyzes the condensation reaction of fatty acid synthesis by the addition to an acyl acceptor of two carbons from malonyl-ACP. Catalyzes the first condensation reaction which initiates fatty acid synthesis and may therefore play a role in governing the total rate of fatty acid production. Possesses both acetoacetyl-ACP synthase and acetyl transacylase activities. Its substrate specificity determines the biosynthesis of branched-chain and/or straight-chain of fatty acids. This is Beta-ketoacyl-[acyl-carrier-protein] synthase III from Herminiimonas arsenicoxydans.